The chain runs to 76 residues: uncharacterized protein (76 aa).

A helical membrane pass occupies residues 40 to 60 (IVLNLVVLVGVVPLTWMFLGQ).

It is found in the membrane. This is an uncharacterized protein from Dictyostelium discoideum (Social amoeba).